The chain runs to 346 residues: Dimethyladenosine transferase 1, mitochondrial (346 aa).

A mitochondrion-targeting transit peptide spans 1 to 27 (MATQGVLAKYRLPPLPTIGEIIKLFNL). S-adenosyl-L-methionine is bound by residues N36, L38, G63, E85, K86, D111, I112, and N141.

This sequence belongs to the class I-like SAM-binding methyltransferase superfamily. rRNA adenine N(6)-methyltransferase family. KsgA subfamily.

It is found in the mitochondrion. The enzyme catalyses adenosine(N)/adenosine(N+1) in rRNA + 4 S-adenosyl-L-methionine = N(6)-dimethyladenosine(N)/N(6)-dimethyladenosine(N+1) in rRNA + 4 S-adenosyl-L-homocysteine + 4 H(+). Mitochondrial methyltransferase which uses S-adenosyl methionine to dimethylate two highly conserved adjacent adenosine residues (A1583 and A1584) within the loop of helix 45 at the 3-prime end of 12S rRNA, thereby regulating the assembly or stability of the small subunit of the mitochondrial ribosome. Also required for basal transcription of mitochondrial DNA, probably via its interaction with POLRMT and TFAM. Stimulates transcription independently of the methyltransferase activity. In Xenopus tropicalis (Western clawed frog), this protein is Dimethyladenosine transferase 1, mitochondrial (tfb1m).